A 475-amino-acid chain; its full sequence is Aspartyl/glutamyl-tRNA(Asn/Gln) amidotransferase subunit B (475 aa).

This sequence belongs to the GatB/GatE family. GatB subfamily. In terms of assembly, heterotrimer of A, B and C subunits.

It catalyses the reaction L-glutamyl-tRNA(Gln) + L-glutamine + ATP + H2O = L-glutaminyl-tRNA(Gln) + L-glutamate + ADP + phosphate + H(+). It carries out the reaction L-aspartyl-tRNA(Asn) + L-glutamine + ATP + H2O = L-asparaginyl-tRNA(Asn) + L-glutamate + ADP + phosphate + 2 H(+). Its function is as follows. Allows the formation of correctly charged Asn-tRNA(Asn) or Gln-tRNA(Gln) through the transamidation of misacylated Asp-tRNA(Asn) or Glu-tRNA(Gln) in organisms which lack either or both of asparaginyl-tRNA or glutaminyl-tRNA synthetases. The reaction takes place in the presence of glutamine and ATP through an activated phospho-Asp-tRNA(Asn) or phospho-Glu-tRNA(Gln). The sequence is that of Aspartyl/glutamyl-tRNA(Asn/Gln) amidotransferase subunit B from Bacillus cereus (strain ZK / E33L).